We begin with the raw amino-acid sequence, 93 residues long: Acylphosphatase (93 aa).

The region spanning 5–93 (TAILRVTGFV…EDRKTFDIVY (89 aa)) is the Acylphosphatase-like domain. Active-site residues include R20 and N38.

This sequence belongs to the acylphosphatase family.

The catalysed reaction is an acyl phosphate + H2O = a carboxylate + phosphate + H(+). In Listeria welshimeri serovar 6b (strain ATCC 35897 / DSM 20650 / CCUG 15529 / CIP 8149 / NCTC 11857 / SLCC 5334 / V8), this protein is Acylphosphatase (acyP).